A 476-amino-acid polypeptide reads, in one-letter code: Elongation factor Tu, chloroplastic (476 aa).

The transit peptide at 1–67 (MAISAPAACS…QSTRRSFTVR (67 aa)) directs the protein to the chloroplast. Residues 77 to 281 (KPHVNIGTIG…AVDDYIPIPQ (205 aa)) form the tr-type G domain. Positions 86 to 93 (GHVDHGKT) are G1. 86–93 (GHVDHGKT) serves as a coordination point for GTP. Residue threonine 94 is modified to Phosphothreonine. Residues 127–131 (GITIN) are G2. Positions 148-151 (DCPG) are G3. Residues 148 to 152 (DCPGH) and 203 to 206 (NKED) contribute to the GTP site. The segment at 203 to 206 (NKED) is G4. The G5 stretch occupies residues 241 to 243 (SAL).

This sequence belongs to the TRAFAC class translation factor GTPase superfamily. Classic translation factor GTPase family. EF-Tu/EF-1A subfamily. Interacts with PI5K2. Interacts with APD2.

It is found in the plastid. The protein resides in the chloroplast. Functionally, this protein promotes the GTP-dependent binding of aminoacyl-tRNA to the A-site of ribosomes during protein biosynthesis. This chain is Elongation factor Tu, chloroplastic (TUFA), found in Arabidopsis thaliana (Mouse-ear cress).